The following is a 201-amino-acid chain: 3-isopropylmalate dehydratase small subunit (201 aa).

Belongs to the LeuD family. LeuD type 1 subfamily. Heterodimer of LeuC and LeuD.

The enzyme catalyses (2R,3S)-3-isopropylmalate = (2S)-2-isopropylmalate. Its pathway is amino-acid biosynthesis; L-leucine biosynthesis; L-leucine from 3-methyl-2-oxobutanoate: step 2/4. Functionally, catalyzes the isomerization between 2-isopropylmalate and 3-isopropylmalate, via the formation of 2-isopropylmaleate. The sequence is that of 3-isopropylmalate dehydratase small subunit from Escherichia coli O127:H6 (strain E2348/69 / EPEC).